We begin with the raw amino-acid sequence, 278 residues long: Large ribosomal subunit protein uL2 (278 aa).

The interval 224–262 (VMNPVDHPLGGGEGRTSGGRHPVTPWGKPTKGFKTRKTR) is disordered.

It belongs to the universal ribosomal protein uL2 family. Part of the 50S ribosomal subunit. Forms a bridge to the 30S subunit in the 70S ribosome.

Its function is as follows. One of the primary rRNA binding proteins. Required for association of the 30S and 50S subunits to form the 70S ribosome, for tRNA binding and peptide bond formation. It has been suggested to have peptidyltransferase activity; this is somewhat controversial. Makes several contacts with the 16S rRNA in the 70S ribosome. This Leptospira biflexa serovar Patoc (strain Patoc 1 / Ames) protein is Large ribosomal subunit protein uL2.